Reading from the N-terminus, the 796-residue chain is Protein translocase subunit SecA 2 (796 aa).

ATP-binding positions include Gln84, Gly102–Thr106, and Asp496.

The protein belongs to the SecA family. As to quaternary structure, monomer and homodimer. Part of the essential Sec protein translocation apparatus which comprises SecA, SecYEG and auxiliary proteins SecDF. Other proteins may also be involved.

The protein localises to the cell membrane. Its subcellular location is the cytoplasm. The catalysed reaction is ATP + H2O + cellular proteinSide 1 = ADP + phosphate + cellular proteinSide 2.. Its function is as follows. Part of the Sec protein translocase complex. Interacts with the SecYEG preprotein conducting channel. Has a central role in coupling the hydrolysis of ATP to the transfer of proteins into and across the cell membrane, serving as an ATP-driven molecular motor driving the stepwise translocation of polypeptide chains across the membrane. The sequence is that of Protein translocase subunit SecA 2 from Staphylococcus aureus (strain Mu3 / ATCC 700698).